We begin with the raw amino-acid sequence, 105 residues long: Small ribosomal subunit protein uS10 (105 aa).

It belongs to the universal ribosomal protein uS10 family. In terms of assembly, part of the 30S ribosomal subunit.

In terms of biological role, involved in the binding of tRNA to the ribosomes. The chain is Small ribosomal subunit protein uS10 from Phytoplasma australiense.